The following is an 86-amino-acid chain: Large ribosomal subunit protein bL27 (86 aa).

The segment at 1-24 (MAHKKGTGSTRNGRDSNSKRLGVK) is disordered.

It belongs to the bacterial ribosomal protein bL27 family.

This Prochlorococcus marinus (strain AS9601) protein is Large ribosomal subunit protein bL27.